Here is a 158-residue protein sequence, read N- to C-terminus: Large ribosomal subunit protein bL21 (158 aa).

Positions 127 to 158 (TQETKSAASVKKAAKKSAPQKQAAVASNSKED) are disordered. Residues 131 to 158 (KSAASVKKAAKKSAPQKQAAVASNSKED) show a composition bias toward low complexity.

Belongs to the bacterial ribosomal protein bL21 family. As to quaternary structure, part of the 50S ribosomal subunit. Contacts protein L20.

Its function is as follows. This protein binds to 23S rRNA in the presence of protein L20. This chain is Large ribosomal subunit protein bL21, found in Bartonella henselae (strain ATCC 49882 / DSM 28221 / CCUG 30454 / Houston 1) (Rochalimaea henselae).